A 210-amino-acid chain; its full sequence is Redox-sensing transcriptional repressor Rex (210 aa).

A DNA-binding region (H-T-H motif) is located at residues 16–55; the sequence is IYSRYLRQLIEEGVETVSSGEIAAGVGVSSAQVRKDLAYF. 90–95 is a binding site for NAD(+); sequence GAGKLG.

This sequence belongs to the transcriptional regulatory Rex family. In terms of assembly, homodimer.

Its subcellular location is the cytoplasm. Its function is as follows. Modulates transcription in response to changes in cellular NADH/NAD(+) redox state. This Syntrophomonas wolfei subsp. wolfei (strain DSM 2245B / Goettingen) protein is Redox-sensing transcriptional repressor Rex.